The following is a 360-amino-acid chain: Chorismate synthase (360 aa).

Residues Arg48 and Arg54 each coordinate NADP(+). FMN is bound by residues Arg125–Ser127, Asn246–Ala247, Gly286, Lys301–Ser305, and Arg327.

This sequence belongs to the chorismate synthase family. As to quaternary structure, homotetramer. Requires FMNH2 as cofactor.

It catalyses the reaction 5-O-(1-carboxyvinyl)-3-phosphoshikimate = chorismate + phosphate. It functions in the pathway metabolic intermediate biosynthesis; chorismate biosynthesis; chorismate from D-erythrose 4-phosphate and phosphoenolpyruvate: step 7/7. In terms of biological role, catalyzes the anti-1,4-elimination of the C-3 phosphate and the C-6 proR hydrogen from 5-enolpyruvylshikimate-3-phosphate (EPSP) to yield chorismate, which is the branch point compound that serves as the starting substrate for the three terminal pathways of aromatic amino acid biosynthesis. This reaction introduces a second double bond into the aromatic ring system. In Haemophilus ducreyi (strain 35000HP / ATCC 700724), this protein is Chorismate synthase.